The sequence spans 90 residues: uncharacterized protein (90 aa).

The next 2 helical transmembrane spans lie at Ile17–Val37 and Ile55–Ala75.

Its subcellular location is the membrane. This is an uncharacterized protein from Schizosaccharomyces pombe (strain 972 / ATCC 24843) (Fission yeast).